The primary structure comprises 363 residues: Protein RecA (363 aa).

ATP is bound at residue 77–84 (GPESSGKT).

It belongs to the RecA family.

It is found in the cytoplasm. Functionally, can catalyze the hydrolysis of ATP in the presence of single-stranded DNA, the ATP-dependent uptake of single-stranded DNA by duplex DNA, and the ATP-dependent hybridization of homologous single-stranded DNAs. It interacts with LexA causing its activation and leading to its autocatalytic cleavage. This Agrobacterium fabrum (strain C58 / ATCC 33970) (Agrobacterium tumefaciens (strain C58)) protein is Protein RecA.